A 559-amino-acid chain; its full sequence is NXPE family member 2 (559 aa).

Residues 17–37 (AIARKLLLMLTFILIFWIIYL) traverse the membrane as a helical segment.

The protein belongs to the NXPE family.

Its subcellular location is the membrane. This Homo sapiens (Human) protein is NXPE family member 2 (NXPE2).